The following is a 633-amino-acid chain: MSEVLDDKPEVLVQKLDALPTDPGVYKFLDDEESVLYVGKAKNLRNRVRTYFQQSRQRDGRIEVMVQKAVDVDIIVTDTEAEALILENNQIKELQPRYNVNLRDDKTYPYICIKNERFPRVFKTRTVKQDGSEYFGPYADVSKMNSMMDAIRSVFQLRTCSLDLTEEKIEAGKYDVCLQHHIDNCKAPCVGKQSEADYMETIEQVKKLLNGQTQELMDLLKDEMQRQSDAHNFEEAARLRDQVKALKDYSQQQKVVSQDFADRDVFALHVERDEDIGCGVLFQVREGKMIGKRHKFLRSVEERSDAELILSLVENYYAEANFYPEEVLLSHDPNDHPAQDTHALEELLRQEQGHQVPIKVPQRGEKASLVRMATSNAKLQVGEWKTQQMKRERNRIPESIKALGEALNMEAPPRRVDGIDVSHHGGKETVASCVVFTDATPRKSDYRTYKIRSTEEGTPDDYKAMREVVRRRYRRMVEEDGPWPDLVVIDGGKGQLSSAVEMLKEVGAFDRFPVIGLAKRLEEVYRPGDSDPVFLAKDSPALQLLQKVRDEAHRFAVTYQRKRRKKKTLQSELLDIHGIGPKTAKKLLGEFGSAAKVKEADEEALAEVVGPAKAETITDYYDETEAPAPAETE.

Residues 21–100 enclose the GIY-YIG domain; sequence TDPGVYKFLD…IKELQPRYNV (80 aa). One can recognise a UVR domain in the interval 214–249; sequence QELMDLLKDEMQRQSDAHNFEEAARLRDQVKALKDY.

The protein belongs to the UvrC family. As to quaternary structure, interacts with UvrB in an incision complex.

The protein localises to the cytoplasm. Functionally, the UvrABC repair system catalyzes the recognition and processing of DNA lesions. UvrC both incises the 5' and 3' sides of the lesion. The N-terminal half is responsible for the 3' incision and the C-terminal half is responsible for the 5' incision. The protein is UvrABC system protein C of Salinibacter ruber (strain DSM 13855 / M31).